We begin with the raw amino-acid sequence, 132 residues long: Small ribosomal subunit protein uS8 (132 aa).

This sequence belongs to the universal ribosomal protein uS8 family. Part of the 30S ribosomal subunit. Contacts proteins S5 and S12.

Its function is as follows. One of the primary rRNA binding proteins, it binds directly to 16S rRNA central domain where it helps coordinate assembly of the platform of the 30S subunit. In Rhodopseudomonas palustris (strain BisB18), this protein is Small ribosomal subunit protein uS8.